The following is a 345-amino-acid chain: Phosphoribosylformylglycinamidine cyclo-ligase (345 aa).

The protein belongs to the AIR synthase family.

It localises to the cytoplasm. It catalyses the reaction 2-formamido-N(1)-(5-O-phospho-beta-D-ribosyl)acetamidine + ATP = 5-amino-1-(5-phospho-beta-D-ribosyl)imidazole + ADP + phosphate + H(+). The protein operates within purine metabolism; IMP biosynthesis via de novo pathway; 5-amino-1-(5-phospho-D-ribosyl)imidazole from N(2)-formyl-N(1)-(5-phospho-D-ribosyl)glycinamide: step 2/2. The chain is Phosphoribosylformylglycinamidine cyclo-ligase from Escherichia coli O6:K15:H31 (strain 536 / UPEC).